We begin with the raw amino-acid sequence, 124 residues long: UPF0231 protein Sbal223_3655 (124 aa).

The protein belongs to the UPF0231 family.

The chain is UPF0231 protein Sbal223_3655 from Shewanella baltica (strain OS223).